The sequence spans 258 residues: MKSACLIILASLVVCNLTLARGQGIPAEEETGDRQTIDDIILQRAESLLLRSILKNIGDEDGANEGLTSQPEWLVKRQHPGKRYQEELEKRQHPGKREEDEDEDYDEVQKRQHPGKREDEFDSFVELQRRQHPGKRLILEQITENPAFLSELSKRQHPGKRYVMYYSKRQHPGRREVDDESDAGDLRELEKRQHPGKRYLDNTSPDLGANSPCDVLDPGCSKANLLLQLLDNVNKSRAEKRQHPGKRSAPVEDLTEQE.

A signal peptide spans 1–22 (MKSACLIILASLVVCNLTLARG). Q78 is subject to Pyrrolidone carboxylic acid. P80 bears the Proline amide mark. Composition is skewed to basic and acidic residues over residues 84-98 (YQEE…GKRE) and 107-119 (EVQK…KRED). A disordered region spans residues 84–124 (YQEELEKRQHPGKREEDEDEDYDEVQKRQHPGKREDEFDSF). Q92 is modified (pyrrolidone carboxylic acid). The residue at position 94 (P94) is a Proline amide. Q112 carries the pyrrolidone carboxylic acid modification. P114 is modified (proline amide). Q131 bears the Pyrrolidone carboxylic acid mark. Position 133 is a proline amide (P133). At Q156 the chain carries Pyrrolidone carboxylic acid. Residue P158 is modified to Proline amide. Disordered stretches follow at residues 166 to 215 (YSKR…PCDV) and 236 to 258 (SRAE…TEQE). Residue Q170 is modified to Pyrrolidone carboxylic acid. A Proline amide modification is found at P172. The span at 184–193 (GDLRELEKRQ) shows a compositional bias: basic and acidic residues. Q193 carries the post-translational modification Pyrrolidone carboxylic acid. Residue P195 is modified to Proline amide. The residue at position 242 (Q242) is a Pyrrolidone carboxylic acid. At P244 the chain carries Proline amide.

It belongs to the TRH family.

Its subcellular location is the secreted. In terms of biological role, functions as a regulator of the biosynthesis of TSH in the anterior pituitary gland and as a neurotransmitter/ neuromodulator in the central and peripheral nervous systems. The sequence is that of Pro-thyrotropin-releasing hormone-A (trha) from Oncorhynchus nerka (Sockeye salmon).